Reading from the N-terminus, the 400-residue chain is Nicotinate phosphoribosyltransferase (400 aa).

At His220 the chain carries Phosphohistidine; by autocatalysis.

It belongs to the NAPRTase family. Transiently phosphorylated on a His residue during the reaction cycle. Phosphorylation strongly increases the affinity for substrates and increases the rate of nicotinate D-ribonucleotide production. Dephosphorylation regenerates the low-affinity form of the enzyme, leading to product release.

The catalysed reaction is nicotinate + 5-phospho-alpha-D-ribose 1-diphosphate + ATP + H2O = nicotinate beta-D-ribonucleotide + ADP + phosphate + diphosphate. It participates in cofactor biosynthesis; NAD(+) biosynthesis; nicotinate D-ribonucleotide from nicotinate: step 1/1. Its function is as follows. Catalyzes the synthesis of beta-nicotinate D-ribonucleotide from nicotinate and 5-phospho-D-ribose 1-phosphate at the expense of ATP. The sequence is that of Nicotinate phosphoribosyltransferase from Escherichia coli O157:H7.